A 588-amino-acid chain; its full sequence is Arginine--tRNA ligase (588 aa).

Positions 126–136 (PNIAKEMHVGH) match the 'HIGH' region motif.

This sequence belongs to the class-I aminoacyl-tRNA synthetase family. As to quaternary structure, monomer.

It is found in the cytoplasm. The enzyme catalyses tRNA(Arg) + L-arginine + ATP = L-arginyl-tRNA(Arg) + AMP + diphosphate. The protein is Arginine--tRNA ligase of Nostoc sp. (strain PCC 7120 / SAG 25.82 / UTEX 2576).